The sequence spans 296 residues: 33 kDa chaperonin (296 aa).

Intrachain disulfides connect Cys-236-Cys-238 and Cys-269-Cys-272.

The protein belongs to the HSP33 family. Post-translationally, under oxidizing conditions two disulfide bonds are formed involving the reactive cysteines. Under reducing conditions zinc is bound to the reactive cysteines and the protein is inactive.

The protein localises to the cytoplasm. Functionally, redox regulated molecular chaperone. Protects both thermally unfolding and oxidatively damaged proteins from irreversible aggregation. Plays an important role in the bacterial defense system toward oxidative stress. The chain is 33 kDa chaperonin from Lactobacillus acidophilus (strain ATCC 700396 / NCK56 / N2 / NCFM).